The sequence spans 288 residues: 33 kDa chaperonin (288 aa).

Intrachain disulfides connect Cys-235–Cys-237 and Cys-268–Cys-271.

The protein belongs to the HSP33 family. In terms of processing, under oxidizing conditions two disulfide bonds are formed involving the reactive cysteines. Under reducing conditions zinc is bound to the reactive cysteines and the protein is inactive.

It is found in the cytoplasm. In terms of biological role, redox regulated molecular chaperone. Protects both thermally unfolding and oxidatively damaged proteins from irreversible aggregation. Plays an important role in the bacterial defense system toward oxidative stress. The polypeptide is 33 kDa chaperonin (Streptococcus suis (strain 98HAH33)).